An 83-amino-acid polypeptide reads, in one-letter code: Exodeoxyribonuclease 7 small subunit (83 aa).

This sequence belongs to the XseB family. In terms of assembly, heterooligomer composed of large and small subunits.

Its subcellular location is the cytoplasm. It catalyses the reaction Exonucleolytic cleavage in either 5'- to 3'- or 3'- to 5'-direction to yield nucleoside 5'-phosphates.. Functionally, bidirectionally degrades single-stranded DNA into large acid-insoluble oligonucleotides, which are then degraded further into small acid-soluble oligonucleotides. In Heliobacterium modesticaldum (strain ATCC 51547 / Ice1), this protein is Exodeoxyribonuclease 7 small subunit.